We begin with the raw amino-acid sequence, 374 residues long: DNA replication and repair protein RecF (374 aa).

Residue 34–41 (GDNGAGKT) participates in ATP binding.

The protein belongs to the RecF family.

It is found in the cytoplasm. Functionally, the RecF protein is involved in DNA metabolism; it is required for DNA replication and normal SOS inducibility. RecF binds preferentially to single-stranded, linear DNA. It also seems to bind ATP. The polypeptide is DNA replication and repair protein RecF (Rhizobium etli (strain ATCC 51251 / DSM 11541 / JCM 21823 / NBRC 15573 / CFN 42)).